A 121-amino-acid polypeptide reads, in one-letter code: RxLR effector protein PexRD2 (121 aa).

The first 18 residues, 1-18 (MRLSYVFVVFAASLLVTA), serve as a signal peptide directing secretion. Residues 38–56 (RLLRKHYTAAENDGDSEAR) carry the RxLR-dEER motif. A WY domain region spans residues 57–121 (ALNPEKMKTM…LNYVAEHTAV (65 aa)).

This sequence belongs to the RxLR effector family.

It is found in the secreted. The protein localises to the host cytoplasm. It localises to the host nucleus. Functionally, secreted effector involved in P.mirabilis colonization of host plants. May perturb the signaling of cell death associated with plant immunity, via interaction with a host MAP kinase. This is RxLR effector protein PexRD2 from Phytophthora mirabilis.